The sequence spans 161 residues: Large ribosomal subunit protein uL30m (161 aa).

A mitochondrion-targeting transit peptide spans 1–34 (MAGILRLVVQRPPGGLQTVTKGVESLIGTDWIRH).

The protein belongs to the universal ribosomal protein uL30 family. As to quaternary structure, component of the mitochondrial ribosome large subunit (39S) which comprises a 16S rRNA and about 50 distinct proteins.

Its subcellular location is the mitochondrion. The chain is Large ribosomal subunit protein uL30m (MRPL30) from Macaca fascicularis (Crab-eating macaque).